The sequence spans 1448 residues: Glutamate receptor ionotropic, NMDA 2B (1448 aa).

A signal peptide spans 1–24 (MRPTEACCYLKISLIILFYMGCYA). Over 25 to 554 (QKHPNMDIAV…SAFLEPFSAD (530 aa)) the chain is Extracellular. C81 and C316 are disulfide-bonded. Zn(2+)-binding residues include H122 and E279. N336 carries N-linked (GlcNAc...) asparagine glycosylation. Cystine bridges form between C426-C453 and C433-C454. 2 residues coordinate L-glutamate: T511 and R516. The helical transmembrane segment at 555 to 573 (VWVMMFVMLLIVSAVAVFV) threads the bilayer. At 574–600 (FEYFSPVGYNRCLADGREPGGPSFTIG) the chain is on the cytoplasmic side. The segment at residues 601 to 620 (KAIWLLWGLVFNNSVPVQNP) is an intramembrane region (discontinuously helical). Residues 601-620 (KAIWLLWGLVFNNSVPVQNP) form a pore-forming region. Over 621 to 627 (KGTTSKI) the chain is Cytoplasmic. Residues 628–643 (MVSVWAFFAVIFLASY) traverse the membrane as a helical segment. Topologically, residues 644–819 (TANLAAFMIQ…LDIDNMAGVF (176 aa)) are extracellular. N685 carries N-linked (GlcNAc...) asparagine glycosylation. L-glutamate-binding positions include 687 to 688 (ST) and D729. A disulfide bridge connects residues C743 and C798. The helical transmembrane segment at 820–839 (YMLAAAMALSLITFIMEHLF) threads the bilayer. Topologically, residues 840-1448 (FWQLRHCFMG…EKLSSIESDV (609 aa)) are cytoplasmic. Positions 1254 to 1265 (APNSKYPQSPNG) are enriched in polar residues. The tract at residues 1254–1277 (APNSKYPQSPNGKAQKRNRSKLHR) is disordered. Basic residues predominate over residues 1267 to 1277 (AQKRNRSKLHR).

This sequence belongs to the glutamate-gated ion channel (TC 1.A.10.1) family. NR2B/GRIN2B subfamily. As to quaternary structure, heterotetramer. Forms heterotetrameric channels composed of two GluN1/zeta subunits (GRIN1), and two identical GluN2/epsilon subunits (GRIN2A, GRIN2B, GRIN2C or GRIN2D) or GluN3 subunits (GRIN3A or GRIN3B) (in vitro). In vivo, the subunit composition may depend on the expression levels of the different subunits. In terms of tissue distribution, detected in oocytes.

The protein resides in the cell membrane. Its subcellular location is the postsynaptic cell membrane. It carries out the reaction Ca(2+)(in) = Ca(2+)(out). The catalysed reaction is Na(+)(in) = Na(+)(out). The enzyme catalyses K(+)(in) = K(+)(out). Functionally, component of N-methyl-D-aspartate (NMDA) receptors (NMDARs) that function as heterotetrameric, ligand-gated cation channels with high calcium permeability and voltage-dependent block by Mg(2+). Channel activation requires binding of the neurotransmitter L-glutamate to the GluN2 subunit, glycine binding to the GluN1 subunit, plus membrane depolarization to eliminate channel inhibition by Mg(2+). NMDARs mediate simultaneously the potasium efflux and the influx of calcium and sodium. Each GluN2 subunit confers differential attributes to channel properties, including activation, deactivation and desensitization kinetics, pH sensitivity, Ca2(+) permeability, and binding to allosteric modulators. The sequence is that of Glutamate receptor ionotropic, NMDA 2B from Xenopus laevis (African clawed frog).